Reading from the N-terminus, the 93-residue chain is Small ribosomal subunit protein uS19 (93 aa).

The protein belongs to the universal ribosomal protein uS19 family.

In terms of biological role, protein S19 forms a complex with S13 that binds strongly to the 16S ribosomal RNA. The polypeptide is Small ribosomal subunit protein uS19 (Micrococcus luteus (strain ATCC 4698 / DSM 20030 / JCM 1464 / CCM 169 / CCUG 5858 / IAM 1056 / NBRC 3333 / NCIMB 9278 / NCTC 2665 / VKM Ac-2230) (Micrococcus lysodeikticus)).